The following is a 360-amino-acid chain: Protein MGF 360-2L (360 aa).

The protein belongs to the asfivirus MGF 360 family.

In terms of biological role, plays a role in virus cell tropism, and may be required for efficient virus replication in macrophages. The polypeptide is Protein MGF 360-2L (Ornithodoros (relapsing fever ticks)).